The sequence spans 45 residues: Psychimicin (45 aa).

3 cysteine pairs are disulfide-bonded: Cys-10/Cys-24, Cys-14/Cys-36, and Cys-25/Cys-42.

Monomer. As to expression, hemolymph.

Its subcellular location is the secreted. Functionally, has antimicrobial activity. Is particularly active against fungi, and to a lesser extent against Gram-positive and Gram-negative bacteria. This chain is Psychimicin, found in Oiketicus kirbyi (Bagworm moth).